Reading from the N-terminus, the 517-residue chain is MDFRTTCEETKTGVCLLQDGNQEPFKVRLHLARDLLMLQEQDVLCVSGEPFYSGERTVTIRRQTVGGFGLSIKGGAEHNIPVVISKISKEQRAELSGLLFIGDAILQINGINVRKCRHEEVVQVLRNAGEEVTLTVSFLKRAPAFLKLPVNEDCACAPSDQSSGTSSPLCDSGLHLNYHPNNTDTLSCSSWPTSPGLRWEKRWCDLRLIPLLHARFSQYVPGTDLSRQNESQVVAVDGVCSGILQCLSAEDCMDWLQAIASNISNLTKHNIKKINRNFPVNQQIVYMGWCEAREQESLQDRVYTPVFLALRGSCLYRFLSPPVTTWDWTRAEKTFSVCEIMCKVLKDSDLLDRRKHCFTMQSECGEDLYFSVELESDLAQWERAFQTATFLEVERIQCKTYACVLESHLMGLTIDFSTGFICFDAATKAVLWRYKFSQLKGSSDDGKSKIKFLFQNPDTKQIEAKELEFSNLFAVLHCIHSFFAAKVACLDPLFLGNQAATTAAVSSASTSKAKHLA.

In terms of domain architecture, PDZ spans 57–140 (TVTIRRQTVG…EVTLTVSFLK (84 aa)). Residues 283-390 (QIVYMGWCEA…WERAFQTATF (108 aa)) form the PH domain.

Belongs to the syntrophin family. In terms of assembly, interacts with the dystrophin protein DMD and related proteins DTNA and DTNB. Interacts with DGKZ.

Its subcellular location is the cytoplasm. It is found in the cytoskeleton. The protein resides in the nucleus. Adapter protein that binds to and probably organizes the subcellular localization of a variety of proteins. May link various receptors to the actin cytoskeleton and the dystrophin glycoprotein complex. May participate in regulating the subcellular location of diacylglycerol kinase-zeta to ensure that diacylglycerol is rapidly inactivated following receptor activation. This is Gamma-1-syntrophin (Sntg1) from Mus musculus (Mouse).